The chain runs to 175 residues: S-fimbrial protein subunit SfaG (175 aa).

The first 27 residues, 1–27 (MVKDIIKTVTFSCMLAGSMFVTCHVCA), serve as a signal peptide directing secretion. A disulfide bridge links cysteine 43 with cysteine 83.

It belongs to the fimbrial protein family.

The protein localises to the fimbrium. In terms of biological role, fimbriae (also called pili), polar filaments radiating from the surface of the bacterium to a length of 0.5-1.5 micrometers and numbering 100-300 per cell, enable bacteria to colonize the epithelium of specific host organs. A minor fimbrial subunit. This protein is necessary for full expression of S-specific binding. S-fimbrial adhesins enable pathogenic E.coli causing urinary-tract infections or newborn meningitis to attach to glycoproteins terminating with alpha-sialic acid-(2-3)-beta-Gal. In Escherichia coli O6:K15:H31 (strain 536 / UPEC), this protein is S-fimbrial protein subunit SfaG (sfaG).